Reading from the N-terminus, the 503-residue chain is Glutamate/gamma-aminobutyrate antiporter (503 aa).

Position 33–43 (33–43) interacts with L-glutamate; the sequence is LHLVFFLLLGG. A run of 7 helical transmembrane segments spans residues 35-55, 153-173, 194-214, 232-252, 366-386, 407-427, and 440-460; these read LVFFLLLGGLLWFLPVALCAA, FVVGIVIPSVILFGLAAAYFI, VSTLVVFVSFILAYMGVEASA, ILLVILAISLDAIGGFSVAAV, LTVVIYLVGYLLFFIVYFVLI, IIAGIGFLLSIFALFISFVPP, and MILLISFVVTAILPFIIYELH.

Belongs to the amino acid-polyamine-organocation (APC) superfamily. Glutamate:GABA antiporter (GGA) (TC 2.A.3.7) family.

It localises to the cell membrane. It catalyses the reaction 4-aminobutanoate(in) + L-glutamate(out) = 4-aminobutanoate(out) + L-glutamate(in). Involved in glutaminase-dependent acid resistance. Exchanges extracellular glutamate (Glu) for intracellular gamma-aminobutyric acid (GABA) under acidic conditions. The polypeptide is Glutamate/gamma-aminobutyrate antiporter (Lactococcus lactis subsp. cremoris (strain MG1363)).